A 277-amino-acid polypeptide reads, in one-letter code: MAIRLYRAYTPGTRNRSVLGFEELVRIKPRKKLTSGQHSGKGRNNRGIITSRHRGGGHKRLYRRMDFRRNKIDVPGRIDSIEYDPNRNTYICLVNYEDGEKRYILHPRGIKIGDMIVSGSEAPISRGNALPLSKMPLGTTIHNVEITPGKGGQLARAAGAVAKLIAKEGRLATLRSPSGEVRLISQDCLATVGQIGNADINNKNFGKAGSKRWLGKRPKVRGVVMNPVDHPHGGGEGRAPIGREKPLTPWGYTAFGRRSRKIRKYSNIFILRRRRRN.

The segment at 30–60 is disordered; sequence RKKLTSGQHSGKGRNNRGIITSRHRGGGHKR. Positions 51–60 are enriched in basic residues; that stretch reads SRHRGGGHKR.

This sequence belongs to the universal ribosomal protein uL2 family. Part of the 50S ribosomal subunit.

It localises to the plastid. The protein localises to the chloroplast. The polypeptide is Large ribosomal subunit protein uL2c (rpl2) (Angiopteris evecta (Mule's foot fern)).